The following is a 59-amino-acid chain: Cecropin-A (59 aa).

The N-terminal stretch at 1–23 (MNFTKLFLLIAMAVLLLTGQSEA) is a signal peptide. A propeptide spans 58-59 (GK) (removed in mature form (AeaeCec2)).

Hemolymph (at protein level).

It localises to the secreted. Its function is as follows. Antimicrobial peptide. Antibacterial activity against Gram-negative bacteria E.coli D22 and D31, E.carotovora, K.pneumoniae, P.aeruginosa, S.typhimurium, E.cloacae B12 and X.campestris and Gram-positive bacteria A.viridans, M.luteus, B.megaterium and S.pyogenes. Possesses antifungal activity against F.oxysporum, F.culmorum and N.crassa, C.albicans, C.neoformans and S.cerevisiae. No activity against Gram-negative S.marcescens Db11, Gram-positive B.cereus, B.subtilis, B.thuringiensis, S.aureus and L.monocytogenes, the fungi A.fumigatus and B.bassiana and C.glabrata. Partially neutralizes lipopolysaccharides (LPS). Exhibits anti-inflammatory properties: inhibits LPS-induced iNOS/NOS2 transcription, nitric oxide (NO) and pro-inflammatory cytokine production in mouse macrophages and human peripheral blood mononuclear cells (PBMCs); inhibits LPS-induced activation of MAPK and NF-kappa-B signaling pathways in mouse macrophages. The sequence is that of Cecropin-A (CECA) from Aedes aegypti (Yellowfever mosquito).